The following is a 158-amino-acid chain: CD-NTase/cGAS isopeptidase (158 aa).

Glu38 functions as the Proton donor/acceptor in the catalytic mechanism. Zn(2+)-binding residues include His100, His102, and Asp113.

It belongs to the peptidase M67B family. Cap3 isopeptidase subfamily.

Functionally, metalloprotease priming reversal component of a CBASS antivirus system. CBASS (cyclic oligonucleotide-based antiphage signaling system) provides immunity against bacteriophages. The CD-NTase protein synthesizes cyclic nucleotides in response to infection; these serve as specific second messenger signals. The signals activate a diverse range of effectors, leading to bacterial cell death and thus abortive phage infection. A type II-A(GA) CBASS system. In terms of biological role, reverses the primed state of CdnA, the CD-NTase. The capV-cdnA-cap2-cap3 operon provides about 10(4)-fold protection in strain BWHPSA011 against infection by phage PaMx41. In P.aeruginosa strain PAO1 it confers protection against phages PaMx41 and JBD18 but not JBD67 (JBD18 and JBD67 do not replicate in BWHPSA011 / Pa011). When acb2 in JBD67 is deleted this CBASS operon then protects against JDB67 also. This CBASS system limits prophage induction of lysogenized JBD67 as well as viral lytic replication. This chain is CD-NTase/cGAS isopeptidase, found in Pseudomonas aeruginosa (strain BWHPSA011 / Pa011).